The sequence spans 121 residues: Ribosome-binding factor A (121 aa).

This sequence belongs to the RbfA family. Monomer. Binds 30S ribosomal subunits, but not 50S ribosomal subunits or 70S ribosomes.

It is found in the cytoplasm. One of several proteins that assist in the late maturation steps of the functional core of the 30S ribosomal subunit. Associates with free 30S ribosomal subunits (but not with 30S subunits that are part of 70S ribosomes or polysomes). Required for efficient processing of 16S rRNA. May interact with the 5'-terminal helix region of 16S rRNA. In Finegoldia magna (strain ATCC 29328 / DSM 20472 / WAL 2508) (Peptostreptococcus magnus), this protein is Ribosome-binding factor A.